The primary structure comprises 435 residues: Astacin-like metalloendopeptidase (435 aa).

Positions 1–23 (MGIMGSLWPWILTMLSLLGLSMG) are cleaved as a signal peptide. In terms of domain architecture, Peptidase M12A spans 85 to 282 (RLLSVTNNKW…TRVCRLYNCS (198 aa)). Intrachain disulfides connect cysteine 132-cysteine 281 and cysteine 153-cysteine 172. Residue histidine 182 coordinates Zn(2+). Glutamate 183 is a catalytic residue. Zn(2+) is bound by residues histidine 186 and histidine 192. Low complexity predominate over residues 318-329 (SEESGSSAPSGS). Residues 318–356 (SEESGSSAPSGSRTGGQSIAGLGNSQQGWEHPPQSTFSV) form a disordered region. Positions 340 to 355 (GNSQQGWEHPPQSTFS) are enriched in polar residues.

Interacts (via N-terminal domain) with SPACA3; the interaction occurs during fertilization. Zn(2+) serves as cofactor. Ovary-specific. Expressed in secondary, antral and Graafian follicle oocytes. Expressed in the egg cells. Not detected in two-cell embryos. Not detected in naked oocytes, oocytes in primordial or unilaminar primary follicles, or in any other ovarian cells at pre-pubertal, pubertal or adult stages (at protein level). Ovary-specific.

The protein resides in the cytoplasm. Its subcellular location is the cell membrane. The protein localises to the cytoplasmic vesicle. It is found in the secretory vesicle. It localises to the cortical granule. With respect to regulation, inhibited by wide spectrum metalloproteinase inhibitor batimastat (BB-94). Also inhibited by EDTA. Oocyte-specific oolemmal receptor involved in sperm and egg adhesion and fertilization. Plays a role in the polyspermy inhibition. Probably acts as a protease for the post-fertilization cleavage of ZP2. Cleaves the sperm-binding ZP2 at the surface of the zona pellucida after fertilization and cortical granule exocytosis, rendering the zona pellucida unable to support further sperm binding. In Mus musculus (Mouse), this protein is Astacin-like metalloendopeptidase.